Here is a 509-residue protein sequence, read N- to C-terminus: 5-OH-xanthotoxin synthase (509 aa).

A helical transmembrane segment spans residues 5–25; that stretch reads AVVILLILAFPIASVYVLFYH. Residues 368–373 are substrate specificity; the sequence is TGALLI. Cys449 contacts heme.

The protein belongs to the cytochrome P450 family. Heme serves as cofactor.

Its subcellular location is the microsome membrane. It catalyses the reaction xanthotoxin + reduced [NADPH--hemoprotein reductase] + O2 = 5-hydroxyxanthotoxin + oxidized [NADPH--hemoprotein reductase] + H2O + 2 H(+). Its pathway is secondary metabolite biosynthesis. Functionally, involved in the biosynthesis of coumarins and furanocoumarins (FCs), natural products required for defense responses against attacks by predators with potential medical and agroindustrial usages such as anticoagulant, rodenticide and artificial vanilla substitutes. Catalyzes the conversion of xanthotoxin into 5-hydroxyxanthotoxin. The sequence is that of 5-OH-xanthotoxin synthase from Ammi majus (Bishop's weed).